The sequence spans 1363 residues: Zinc finger protein 541 (1363 aa).

Disordered regions lie at residues 1 to 23 (MEPY…SFSE) and 106 to 137 (LGAL…SPQN). C2H2-type zinc fingers lie at residues 140-162 (LDCS…YLTH), 168-190 (HVCK…MLTH), and 196-221 (FVCI…EVQH). 4 disordered regions span residues 232–269 (EEEA…GSVL), 286–387 (KIPS…GWPE), 440–532 (VASR…PGGL), and 574–741 (QVAT…GYRL). Over residues 311 to 321 (SLGSSSCTPAS) the composition is skewed to polar residues. Residues 335 to 345 (EETHPPRKEAA) show a composition bias toward basic and acidic residues. A compositionally biased stretch (low complexity) spans 453-465 (PSSTPTSVEPSPS). The span at 597 to 608 (GPWPPQTLPPAP) shows a compositional bias: pro residues. The segment covering 659–670 (PPSLTGPGLLPS) has biased composition (low complexity). The segment at 838–860 (FVCKNCSQMFYTEKGLSSHMCFH) adopts a C2H2-type 4 zinc-finger fold. A disordered region spans residues 935–978 (QGQEKDGEERDSKESCQYRKRKKRPQPKALFAPPAPSALGEPGP). The segment covering 937-951 (QEKDGEERDSKESCQ) has biased composition (basic and acidic residues). Residues 1063-1155 (PHINVGSRFQ…VALETLLLRG (93 aa)) enclose the ELM2 domain. Residues 1170–1221 (TGSDIWTPMEKRLFKKAFCAHKKDFYLIHKMIQTKSVAQCVEYYYIWKKMVK) enclose the SANT domain. The interval 1243-1298 (RTEDKVTCSPRERPTHRPTPELKIKTKSYRRESILHSSPSAAPKRTPEPPGSVESQ) is disordered. Positions 1244-1276 (TEDKVTCSPRERPTHRPTPELKIKTKSYRRESI) are enriched in basic and acidic residues. The C2H2-type 5 zinc finger occupies 1301–1323 (FPCRECERVFDKIKSRNAHMKRH). The tract at residues 1343–1363 (LKEEEEEEEEELGADMGPLQW) is disordered. Acidic residues predominate over residues 1345-1355 (EEEEEEEEELG).

Interacts with DNTTIP1. Identified in a complex with KCTD19, HDAC1 and HSPA2. Identified in a complex with HDAC1, HDAC2, DNTTIP1 and KCTD19. Identified in a complex with KCTD19 and HDAC1. In terms of tissue distribution, germ-cell-specific. Specifically present in testicular spermatogenic cells, but not in testicular and mature sperm. During spermatogenesis, it is present in spermatocytes and round spermatids only (at protein level).

Its subcellular location is the nucleus. In terms of biological role, transcription regulator which is essential for male fertility and for the completion of meiotic prophase in spermatocytes. Regulates progression of the pachytene stage of meiotic prophase by activating the expression of genes involved in meiosis and post-meiosis during spermatogenesis. Maintains the repression of pre-pachytene transcriptional programs, including meiotic double-strand breaks (DSB) formation genes in pachytene spermatocytes and suppresses aberrant DSB formation after mid-pachytene, thus ensuring meiosis progression. The polypeptide is Zinc finger protein 541 (Znf541) (Mus musculus (Mouse)).